The sequence spans 154 residues: Endoribonuclease YbeY (154 aa).

Zn(2+) contacts are provided by His117, His121, and His127.

It belongs to the endoribonuclease YbeY family. Requires Zn(2+) as cofactor.

The protein localises to the cytoplasm. Single strand-specific metallo-endoribonuclease involved in late-stage 70S ribosome quality control and in maturation of the 3' terminus of the 16S rRNA. The polypeptide is Endoribonuclease YbeY (Mycoplasma pneumoniae (strain ATCC 29342 / M129 / Subtype 1) (Mycoplasmoides pneumoniae)).